Reading from the N-terminus, the 1059-residue chain is MLYRVSGFYKRHTRNFTNIDYGYYIRNFIHHIASKIYPYAKVVLPNFRAAHYFYILTLVILGSILVYPVKTCAYIDVLFFTAGASTQAGLNTVNVNDLSLYQQIVLYLLATLATPIFIHGSLLFVRLYYFERHFDNIKERSLMDYRMRKSATLARLGSAPTMSSTRLNTFNNQVLGFQEREAEKGSSSSPQSSSSQTSQPVSTAYNDQGGNDIEHHSEPSDSDDDESGNGPVTFQEKIHFEEPQRPRSQRRHSRTDSGIKFSALPHPRRRKSIDPEDMYRSINMLQEHKKNQEAKSKGIQFLNIGSPVRRKSRSSNIEAFPEEDTNPSRDDEITPATNSVGTGNNDEDEDDILIIKPPIEIENSDGANPIFTKKKKLASQIQFKETPGKAKKWITTKKRKHYNPWTSKLKKTLSNSSKKGSLSVVPTDTEDDSEDEEYASIDSETSDISDNEHAADNAEGSDVDSVGSYEEDEDEDEHNSDDDDDDDDGEGERRLGNGASLTKAQSHLVLPSKDETGGKKYTKRSNTLDTPQQNTSDGRKIRKKAPKRKTPRTQRNASFNQHSNVSIGDGSIENVDTNDSYQRLSRTMSGNYLSWTPTVGRNSTFIKLTDEQKEELGGIEYRAVKLLIKIIVVYYVGFNIIPGVMLSIWIYCMPHYKNLMISSSISPAWWAFFTSQSSFNDLGLTLTSNSMMSFNQNAFVQILCSFLIVIGNTGFPILLRFIIWVMFKTARPLSLYKESLGFLLDHPRRCFTLLFPSVPTWWLFFILVVLNGFDLVIFCILDLHDDTFKGVDMGYRVLNGLFQAFCTRTVGFSVMDLSQLHAATQVSYLIMMYISVLPIAISVRRTNVYEEQSLGVYAKENAEGVDESAPSNYVGSHLRNQLSYDLWYICLGLFIICIAEGKRLKEQDLRFSIFAVLFEIVSAYGTVGMSMGYPGVDCSLSGEFNVISKLVIIAMMIRGRHRGLPYTIDRAIMLPNAAMKRHDRLQEEHAINRHNTMERTTTLGRVATFGNGPIDGGNNLLTRAITNIEHRLRNRRDGRSESSTVSEDPRYVVRTVSEV.

The Cytoplasmic portion of the chain corresponds to Met1–Asn46. Residues Phe47 to Tyr67 traverse the membrane as a helical segment. Residues Pro68–Ala73 are Extracellular-facing. Residues Tyr74–Leu90 lie within the membrane without spanning it. Over Asn91 to Ser99 the chain is Extracellular. The helical transmembrane segment at Leu100–Leu122 threads the bilayer. Topologically, residues Leu123–Lys625 are cytoplasmic. Disordered stretches follow at residues Arg180–Glu276, Ile304–Asp350, and Pro404–Asn574. Positions Ser186–Thr203 are enriched in low complexity. The span at Glu236–Arg245 shows a compositional bias: basic and acidic residues. Over residues Pro335–Asn344 the composition is skewed to polar residues. Over residues Thr412–Ser423 the composition is skewed to low complexity. 2 stretches are compositionally biased toward acidic residues: residues Asp428–Ser449 and Tyr469–Glu490. Residues Arg524–Ser536 show a composition bias toward polar residues. A compositionally biased stretch (basic residues) spans Lys540–Arg552. A compositionally biased stretch (polar residues) spans Asn556–Ser566. Residues Leu626–Trp649 form a helical membrane-spanning segment. Residues Ile650–Ala668 lie on the Extracellular side of the membrane. Residues Trp669–Thr685 lie within the membrane without spanning it. The Extracellular portion of the chain corresponds to Leu686–Gln696. The chain crosses the membrane as a helical span at residues Asn697 to Thr713. Over Gly714 to Ser757 the chain is Cytoplasmic. The chain crosses the membrane as a helical span at residues Val758–Leu781. Over Asp782 to Arg796 the chain is Extracellular. Residues Val797–Ser813 lie within the membrane without spanning it. Residues Val814–Leu820 lie on the Extracellular side of the membrane. A helical membrane pass occupies residues His821–Arg844. Residues Arg845–His877 are Cytoplasmic-facing. A helical membrane pass occupies residues Leu878–Ala899. Over Glu900–Ser912 the chain is Extracellular. Residues Ile913–Met931 lie within the membrane without spanning it. Residues Gly932–Asn945 lie on the Extracellular side of the membrane. The helical transmembrane segment at Val946–Ile968 threads the bilayer. The Cytoplasmic segment spans residues Asp969 to Val1059.

The protein belongs to the TrkH potassium transport family.

It is found in the cell membrane. The catalysed reaction is K(+)(in) = K(+)(out). It catalyses the reaction chloride(in) = chloride(out). Its activity is regulated as follows. TRK1-mediated chloride conductance is blocked by 4,4'-diisothiocyanatostilbene-2,2'-disulfonic acid. In terms of biological role, potassium transporter that mediates K(+) influx, as well as Cl(-) efflux as a secondary function. TRK1 is the major K(+) uptake transporter that regulates membrane potential and intracellular pH. The TRK1-mediated Cl(-) efflux should serve as a Cl(-) detoxification route and may play a role in sustaining C.albicans on mammalian epithelial surfaces, or in physiological saline solutions such as saliva. Mediates candidacidal activities of cysteine-free peptides, but not of defensins. The hallmark of salivary gland-secreted histatin-5 (Hst 5) killing of C.albicans is the rapid efflux of cellular ATP and other small nucleotides and ions from the cell as well as concurrent intracellular uptake of propidium iodide (PI). TRK1 is the channel for Hst 5-induced killing and histatin-5 may directly or indirectly alter TRK1 function, allowing the efflux of larger anions, including ATP, and the influx of small cationic dyes, such as PI. The sequence is that of Potassium transporter TRK1 from Candida albicans (Yeast).